Here is a 129-residue protein sequence, read N- to C-terminus: Small ribosomal subunit protein uS11 (129 aa).

Belongs to the universal ribosomal protein uS11 family. In terms of assembly, part of the 30S ribosomal subunit. Interacts with proteins S7 and S18. Binds to IF-3.

In terms of biological role, located on the platform of the 30S subunit, it bridges several disparate RNA helices of the 16S rRNA. Forms part of the Shine-Dalgarno cleft in the 70S ribosome. The sequence is that of Small ribosomal subunit protein uS11 from Francisella tularensis subsp. mediasiatica (strain FSC147).